The sequence spans 425 residues: Serine--tRNA ligase (425 aa).

231–233 (TAE) is a binding site for L-serine. An ATP-binding site is contributed by 262-264 (RSE). Glutamate 285 is a binding site for L-serine. 349-352 (EISS) lines the ATP pocket. Serine 385 is an L-serine binding site.

This sequence belongs to the class-II aminoacyl-tRNA synthetase family. Type-1 seryl-tRNA synthetase subfamily. Homodimer. The tRNA molecule binds across the dimer.

The protein localises to the cytoplasm. It carries out the reaction tRNA(Ser) + L-serine + ATP = L-seryl-tRNA(Ser) + AMP + diphosphate + H(+). The enzyme catalyses tRNA(Sec) + L-serine + ATP = L-seryl-tRNA(Sec) + AMP + diphosphate + H(+). It functions in the pathway aminoacyl-tRNA biosynthesis; selenocysteinyl-tRNA(Sec) biosynthesis; L-seryl-tRNA(Sec) from L-serine and tRNA(Sec): step 1/1. In terms of biological role, catalyzes the attachment of serine to tRNA(Ser). Is also able to aminoacylate tRNA(Sec) with serine, to form the misacylated tRNA L-seryl-tRNA(Sec), which will be further converted into selenocysteinyl-tRNA(Sec). The chain is Serine--tRNA ligase from Bartonella bacilliformis (strain ATCC 35685 / KC583 / Herrer 020/F12,63).